Here is a 102-residue protein sequence, read N- to C-terminus: Large ribosomal subunit protein bL21 (102 aa).

Belongs to the bacterial ribosomal protein bL21 family. In terms of assembly, part of the 50S ribosomal subunit. Contacts protein L20.

In terms of biological role, this protein binds to 23S rRNA in the presence of protein L20. This is Large ribosomal subunit protein bL21 from Bacillus pumilus (strain SAFR-032).